The following is a 231-amino-acid chain: Large ribosomal subunit protein uL1 (231 aa).

This sequence belongs to the universal ribosomal protein uL1 family. In terms of assembly, part of the 50S ribosomal subunit.

Binds directly to 23S rRNA. The L1 stalk is quite mobile in the ribosome, and is involved in E site tRNA release. In terms of biological role, protein L1 is also a translational repressor protein, it controls the translation of the L11 operon by binding to its mRNA. In Alkalilimnicola ehrlichii (strain ATCC BAA-1101 / DSM 17681 / MLHE-1), this protein is Large ribosomal subunit protein uL1.